Reading from the N-terminus, the 601-residue chain is Glutathione-regulated potassium-efflux system protein KefB (601 aa).

13 helical membrane-spanning segments follow: residues 4–24, 29–49, 55–75, 87–107, 115–135, 152–172, 177–197, 207–227, 230–250, 262–282, 284–304, 324–344, and 356–376; these read SDLL…VPLA, IGAV…GLGF, EILH…GLEL, IFGV…GLLM, AAVI…LQLM, VLLF…LLAG, HFDW…LIGG, FIAD…LVLG, LFMD…GVLL, AIDP…GMSL, LGVL…LVAV, MQFA…FSTA, and SLLL…MKLV. The 120-residue stretch at 400–519 folds into the RCK N-terminal domain; that stretch reads KPQVIVVGFG…AGVTQFSRET (120 aa).

This sequence belongs to the monovalent cation:proton antiporter 2 (CPA2) transporter (TC 2.A.37) family. KefB subfamily. In terms of assembly, interacts with the regulatory subunit KefG.

Its subcellular location is the cell inner membrane. Its function is as follows. Pore-forming subunit of a potassium efflux system that confers protection against electrophiles. Catalyzes K(+)/H(+) antiport. In Citrobacter koseri (strain ATCC BAA-895 / CDC 4225-83 / SGSC4696), this protein is Glutathione-regulated potassium-efflux system protein KefB.